The chain runs to 247 residues: NCT transcriptional regulatory complex subunit A (247 aa).

Residues Met1–Ser12 are compositionally biased toward basic and acidic residues. Disordered regions lie at residues Met1–Tyr31, Phe48–Met82, and Val212–Asp247. Residues Pro13 to Ile22 show a composition bias toward polar residues.

Belongs to the NC2 alpha/DRAP1 family. Forms the NCT transcriptional regulatory complex with nctB and mot1.

The protein localises to the nucleus. Part of the NCT transcriptional regulatory complex that acts as a key regulator of ergosterol biosynthesis and the azole exporter cdr1B. The NCT complex binds the promoters of genes linked to azole susceptibility, and especially represses the expression of cdr1B transporter. In Aspergillus fumigatus (strain CBS 144.89 / FGSC A1163 / CEA10) (Neosartorya fumigata), this protein is NCT transcriptional regulatory complex subunit A.